The chain runs to 131 residues: MAFSKSLVFVLLAALLISSAVAQSPAPAPSNVGGRRISPAPSPKKMTAPAPAPEVSPSPSPAAALTPESSASPPSPPLADSPTADSPALSPSAISDSPTEAPGPAQGGAVSNKFASFGSVAVMLTAAVLVI.

The N-terminal stretch at 1–22 (MAFSKSLVFVLLAALLISSAVA) is a signal peptide. The segment at 22 to 110 (AQSPAPAPSN…APGPAQGGAV (89 aa)) is disordered. Positions 50-60 (APAPEVSPSPS) are enriched in pro residues. The segment covering 61 to 72 (PAAALTPESSAS) has biased composition (low complexity). The GPI-anchor amidated glycine moiety is linked to residue G108. Residues 109–131 (AVSNKFASFGSVAVMLTAAVLVI) constitute a propeptide, removed in mature form.

This sequence belongs to the classical AGP family. O-glycosylated on the hydroxyproline residues. Predominantly expressed in flowers and at a lower level in roots and leaves.

The protein resides in the cell membrane. In terms of biological role, proteoglycan that seems to be implicated in diverse developmental roles such as differentiation, cell-cell recognition, embryogenesis and programmed cell death. The polypeptide is Classical arabinogalactan protein 1 (AGP1) (Arabidopsis thaliana (Mouse-ear cress)).